The chain runs to 479 residues: Aspartyl/glutamyl-tRNA(Asn/Gln) amidotransferase subunit B (479 aa).

The protein belongs to the GatB/GatE family. GatB subfamily. Heterotrimer of A, B and C subunits.

It catalyses the reaction L-glutamyl-tRNA(Gln) + L-glutamine + ATP + H2O = L-glutaminyl-tRNA(Gln) + L-glutamate + ADP + phosphate + H(+). The enzyme catalyses L-aspartyl-tRNA(Asn) + L-glutamine + ATP + H2O = L-asparaginyl-tRNA(Asn) + L-glutamate + ADP + phosphate + 2 H(+). Its function is as follows. Allows the formation of correctly charged Asn-tRNA(Asn) or Gln-tRNA(Gln) through the transamidation of misacylated Asp-tRNA(Asn) or Glu-tRNA(Gln) in organisms which lack either or both of asparaginyl-tRNA or glutaminyl-tRNA synthetases. The reaction takes place in the presence of glutamine and ATP through an activated phospho-Asp-tRNA(Asn) or phospho-Glu-tRNA(Gln). The chain is Aspartyl/glutamyl-tRNA(Asn/Gln) amidotransferase subunit B from Streptococcus pyogenes serotype M4 (strain MGAS10750).